Consider the following 128-residue polypeptide: Large ribosomal subunit protein bL17 (128 aa).

This sequence belongs to the bacterial ribosomal protein bL17 family. In terms of assembly, part of the 50S ribosomal subunit. Contacts protein L32.

This is Large ribosomal subunit protein bL17 from Enterobacter sp. (strain 638).